We begin with the raw amino-acid sequence, 120 residues long: Large ribosomal subunit protein bL12 (120 aa).

Belongs to the bacterial ribosomal protein bL12 family. Homodimer. Part of the ribosomal stalk of the 50S ribosomal subunit. Forms a multimeric L10(L12)X complex, where L10 forms an elongated spine to which 2 to 4 L12 dimers bind in a sequential fashion. Binds GTP-bound translation factors.

Forms part of the ribosomal stalk which helps the ribosome interact with GTP-bound translation factors. Is thus essential for accurate translation. The polypeptide is Large ribosomal subunit protein bL12 (Lactobacillus acidophilus (strain ATCC 700396 / NCK56 / N2 / NCFM)).